The following is a 449-amino-acid chain: Na(+)-translocating NADH-quinone reductase subunit A (449 aa).

The protein belongs to the NqrA family. As to quaternary structure, composed of six subunits; NqrA, NqrB, NqrC, NqrD, NqrE and NqrF.

The catalysed reaction is a ubiquinone + n Na(+)(in) + NADH + H(+) = a ubiquinol + n Na(+)(out) + NAD(+). Its function is as follows. NQR complex catalyzes the reduction of ubiquinone-1 to ubiquinol by two successive reactions, coupled with the transport of Na(+) ions from the cytoplasm to the periplasm. NqrA to NqrE are probably involved in the second step, the conversion of ubisemiquinone to ubiquinol. This is Na(+)-translocating NADH-quinone reductase subunit A from Actinobacillus pleuropneumoniae serotype 5b (strain L20).